The chain runs to 187 residues: Ribosome-recycling factor (187 aa).

This sequence belongs to the RRF family.

The protein resides in the cytoplasm. Functionally, responsible for the release of ribosomes from messenger RNA at the termination of protein biosynthesis. May increase the efficiency of translation by recycling ribosomes from one round of translation to another. The sequence is that of Ribosome-recycling factor from Nitrosococcus oceani (strain ATCC 19707 / BCRC 17464 / JCM 30415 / NCIMB 11848 / C-107).